The chain runs to 445 residues: V-type proton ATPase subunit H (445 aa).

Belongs to the V-ATPase H subunit family. V-ATPase is a heteromultimeric enzyme composed of a peripheral catalytic V1 complex (components A to H) attached to an integral membrane V0 proton pore complex (components: a, c, c', c'' and d).

Subunit of the peripheral V1 complex of vacuolar ATPase. Subunit H activates the ATPase activity of the enzyme and couples ATPase activity to proton flow. Vacuolar ATPase is responsible for acidifying a variety of intracellular compartments in eukaryotic cells, thus providing most of the energy required for transport processes in the vacuolar system. This Dictyostelium discoideum (Social amoeba) protein is V-type proton ATPase subunit H (vatH).